The sequence spans 346 residues: Glycerol-3-phosphate dehydrogenase [NAD(P)+] (346 aa).

The NADPH site is built by serine 11, tryptophan 12, histidine 32, arginine 33, and lysine 106. Lysine 106, glycine 137, and serine 139 together coordinate sn-glycerol 3-phosphate. Alanine 141 provides a ligand contact to NADPH. Lysine 193, aspartate 246, serine 256, arginine 257, and asparagine 258 together coordinate sn-glycerol 3-phosphate. Lysine 193 functions as the Proton acceptor in the catalytic mechanism. Residue arginine 257 participates in NADPH binding. NADPH contacts are provided by valine 281 and glutamate 283.

It belongs to the NAD-dependent glycerol-3-phosphate dehydrogenase family.

It localises to the cytoplasm. The enzyme catalyses sn-glycerol 3-phosphate + NAD(+) = dihydroxyacetone phosphate + NADH + H(+). It catalyses the reaction sn-glycerol 3-phosphate + NADP(+) = dihydroxyacetone phosphate + NADPH + H(+). It functions in the pathway membrane lipid metabolism; glycerophospholipid metabolism. Catalyzes the reduction of the glycolytic intermediate dihydroxyacetone phosphate (DHAP) to sn-glycerol 3-phosphate (G3P), the key precursor for phospholipid synthesis. In Bacillus licheniformis (strain ATCC 14580 / DSM 13 / JCM 2505 / CCUG 7422 / NBRC 12200 / NCIMB 9375 / NCTC 10341 / NRRL NRS-1264 / Gibson 46), this protein is Glycerol-3-phosphate dehydrogenase [NAD(P)+].